The sequence spans 211 residues: Redox-sensing transcriptional repressor Rex (211 aa).

The H-T-H motif DNA-binding region spans 16-55 (LYYRYLLILNEEGKDKVSSTELSEAVQVDSASIRRDFSYF). NAD(+) is bound at residue 90-95 (GVGNLG).

Belongs to the transcriptional regulatory Rex family. Homodimer.

The protein resides in the cytoplasm. Functionally, modulates transcription in response to changes in cellular NADH/NAD(+) redox state. The chain is Redox-sensing transcriptional repressor Rex from Lactobacillus acidophilus (strain ATCC 700396 / NCK56 / N2 / NCFM).